Consider the following 587-residue polypeptide: Arginine--tRNA ligase (587 aa).

The 'HIGH' region motif lies at 123-133 (ANVAKPLHVGH).

Belongs to the class-I aminoacyl-tRNA synthetase family. As to quaternary structure, monomer.

It is found in the cytoplasm. The enzyme catalyses tRNA(Arg) + L-arginine + ATP = L-arginyl-tRNA(Arg) + AMP + diphosphate. The chain is Arginine--tRNA ligase from Alkaliphilus oremlandii (strain OhILAs) (Clostridium oremlandii (strain OhILAs)).